The primary structure comprises 504 residues: Plasma protease C1 inhibitor (504 aa).

The signal sequence occupies residues 1-22 (MASRLTPLTLLLLLLAGDRAFS). A disordered region spans residues 22 to 67 (SDPEATSHSTQDPLEAQAKSRESFPERDDSWSPPEPTVLPSTWPTT). Positions 39-51 (AKSRESFPERDDS) are enriched in basic and acidic residues. N-linked (GlcNAc...) asparagine glycosylation is found at Asn-75, Asn-83, and Asn-107. Polar residues predominate over residues 85-124 (SFSQHSQPAAQLPTDSPGQPPLNSSSQPSTASDLPTQATT). A disordered region spans residues 85–141 (SFSQHSQPAAQLPTDSPGQPPLNSSSQPSTASDLPTQATTEPFCPEPLAQCSDSDRD). Intrachain disulfides connect Cys-128–Cys-432 and Cys-135–Cys-210. N-linked (GlcNAc...) asparagine glycans are attached at residues Asn-243 and Asn-356.

The protein belongs to the serpin family. In terms of assembly, interacts with MASP1.

It localises to the secreted. Functionally, serine protease inhibitor, which acrs as a regulator of the classical complement pathway. Forms a proteolytically inactive stoichiometric complex with the C1r or C1s proteases. May also regulate blood coagulation, fibrinolysis and the generation of kinins. Very efficient inhibitor of FXIIa. Inhibits chymotrypsin and kallikrein. This is Plasma protease C1 inhibitor (Serping1) from Mus musculus (Mouse).